Reading from the N-terminus, the 142-residue chain is Putative pre-16S rRNA nuclease (142 aa).

Belongs to the YqgF nuclease family.

The protein resides in the cytoplasm. In terms of biological role, could be a nuclease involved in processing of the 5'-end of pre-16S rRNA. In Ruminiclostridium cellulolyticum (strain ATCC 35319 / DSM 5812 / JCM 6584 / H10) (Clostridium cellulolyticum), this protein is Putative pre-16S rRNA nuclease.